Here is a 318-residue protein sequence, read N- to C-terminus: Petal death protein (318 aa).

Positions 1–3 (MAP) are cleaved as a propeptide — removed in mature form. The interval 1–24 (MAPPNGTTNGETEVATQGSYTAVS) is disordered. The Mg(2+) site is built by D107, D109, and K142.

It belongs to the isocitrate lyase/PEP mutase superfamily. Homodimer and homotetramer formed by a dimer of homodimer. Mg(2+) serves as cofactor. Mn(2+) is required as a cofactor. Requires Fe(2+) as cofactor. It depends on Co(2+) as a cofactor. Accumulates in senescing flower petals.

It catalyses the reaction oxaloacetate + H2O = oxalate + acetate + H(+). In terms of biological role, catalyzes cleavage of the C(2)-C(3) bond in oxaloacetate and in (2R)-alkyl malate derivatives to form oxalate and acetate, and alkyl carboxylates and R-ketocarboxylates, respectively. This chain is Petal death protein, found in Dianthus caryophyllus (Carnation).